A 119-amino-acid polypeptide reads, in one-letter code: Large ribosomal subunit protein bL19 (119 aa).

The protein belongs to the bacterial ribosomal protein bL19 family.

This protein is located at the 30S-50S ribosomal subunit interface and may play a role in the structure and function of the aminoacyl-tRNA binding site. This chain is Large ribosomal subunit protein bL19, found in Limosilactobacillus reuteri (strain DSM 20016) (Lactobacillus reuteri).